Consider the following 126-residue polypeptide: Small ribosomal subunit protein uS13 (126 aa).

The interval 96 to 126 (LPVHGQRTHTNARTRKGPRRAIAGKKKAGKK) is disordered.

It belongs to the universal ribosomal protein uS13 family. In terms of assembly, part of the 30S ribosomal subunit. Forms a loose heterodimer with protein S19. Forms two bridges to the 50S subunit in the 70S ribosome.

Its function is as follows. Located at the top of the head of the 30S subunit, it contacts several helices of the 16S rRNA. In the 70S ribosome it contacts the 23S rRNA (bridge B1a) and protein L5 of the 50S subunit (bridge B1b), connecting the 2 subunits; these bridges are implicated in subunit movement. Contacts the tRNAs in the A and P-sites. This chain is Small ribosomal subunit protein uS13, found in Frankia alni (strain DSM 45986 / CECT 9034 / ACN14a).